The chain runs to 647 residues: 2',3'-cyclic-nucleotide 2'-phosphodiesterase/3'-nucleotidase (647 aa).

Residues 1 to 19 form the signal peptide; sequence MIKFSATLLATLIAASVNA. A divalent metal cation is bound by residues Asp31, His33, Asp76, Asn116, His225, His257, and His259. Substrate-binding positions include Tyr440 and 544-550; that span reads YRAYGGK.

The protein belongs to the 5'-nucleotidase family. It depends on a divalent metal cation as a cofactor.

It localises to the periplasm. The enzyme catalyses a nucleoside 2',3'-cyclic phosphate + H2O = a nucleoside 3'-phosphate + H(+). It carries out the reaction a ribonucleoside 3'-phosphate + H2O = a ribonucleoside + phosphate. In terms of biological role, this bifunctional enzyme catalyzes two consecutive reactions during ribonucleic acid degradation. Converts a 2',3'-cyclic nucleotide to a 3'-nucleotide and then the 3'-nucleotide to the corresponding nucleoside and phosphate. This chain is 2',3'-cyclic-nucleotide 2'-phosphodiesterase/3'-nucleotidase (cpdB), found in Salmonella typhimurium (strain LT2 / SGSC1412 / ATCC 700720).